The following is a 183-amino-acid chain: MRKLPRPFYERDTVLVAKELLGKYLVHHDGLEEKIGRIVEVEAYLGQHDLACHSSKGLTKRTKVMFGPAGYAYVYLIYGMYYCMNVVTEKEGVGSAVLIRALEPIKNIQDRTQGPGLLSKAMRIDSKLNHRDLLSNDFYIAEPYGPTDFTIIEKPRIGVHYAKEWADALLRFYIKDNPYISKT.

It belongs to the DNA glycosylase MPG family.

This chain is Putative 3-methyladenine DNA glycosylase, found in Legionella pneumophila (strain Lens).